Consider the following 238-residue polypeptide: Ribonuclease PH (238 aa).

Phosphate contacts are provided by residues Arg-86 and 124 to 126; that span reads GTR.

It belongs to the RNase PH family. As to quaternary structure, homohexameric ring arranged as a trimer of dimers.

It catalyses the reaction tRNA(n+1) + phosphate = tRNA(n) + a ribonucleoside 5'-diphosphate. In terms of biological role, phosphorolytic 3'-5' exoribonuclease that plays an important role in tRNA 3'-end maturation. Removes nucleotide residues following the 3'-CCA terminus of tRNAs; can also add nucleotides to the ends of RNA molecules by using nucleoside diphosphates as substrates, but this may not be physiologically important. Probably plays a role in initiation of 16S rRNA degradation (leading to ribosome degradation) during starvation. This is Ribonuclease PH from Enterobacter sp. (strain 638).